A 125-amino-acid chain; its full sequence is Fluoride-specific ion channel FluC (125 aa).

3 helical membrane passes run 36–56, 65–85, and 99–119; these read GTIF…FLSI, FILF…TFAY, and IIYF…GMFL. Positions 75 and 78 each coordinate Na(+).

Belongs to the fluoride channel Fluc/FEX (TC 1.A.43) family.

The protein localises to the cell inner membrane. It catalyses the reaction fluoride(in) = fluoride(out). With respect to regulation, na(+) is not transported, but it plays an essential structural role and its presence is essential for fluoride channel function. Fluoride-specific ion channel. Important for reducing fluoride concentration in the cell, thus reducing its toxicity. The sequence is that of Fluoride-specific ion channel FluC from Thermosipho africanus (strain TCF52B).